The chain runs to 403 residues: Phosphoglycerate kinase (403 aa).

Residues 22–24, R37, 60–63, R119, and R156 each bind substrate; these read DLN and HLGR. ATP is bound by residues K206, G302, E333, and 359–362; that span reads GGDS.

It belongs to the phosphoglycerate kinase family. In terms of assembly, monomer.

The protein resides in the cytoplasm. It catalyses the reaction (2R)-3-phosphoglycerate + ATP = (2R)-3-phospho-glyceroyl phosphate + ADP. Its pathway is carbohydrate degradation; glycolysis; pyruvate from D-glyceraldehyde 3-phosphate: step 2/5. This Leifsonia xyli subsp. xyli (strain CTCB07) protein is Phosphoglycerate kinase.